A 218-amino-acid chain; its full sequence is Glutathione S-transferase Mu 6 (218 aa).

In terms of domain architecture, GST N-terminal spans 1–88 (MPVTLGYWDI…YLGRKHNLCG (88 aa)). Residues 7-8 (YW), 46-50 (WLNDK), 59-60 (NL), and 72-73 (QS) each bind glutathione. Residues 90–208 (TEEERIRVDI…KTSRFLPSPV (119 aa)) enclose the GST C-terminal domain. Tyrosine 116 contacts substrate.

It belongs to the GST superfamily. Mu family. In terms of assembly, homodimer. In terms of tissue distribution, expressed in liver, stomach and small intestine. Not expressed in spleen, kidney, colon, heart, muscle, brain or lung.

It is found in the cytoplasm. The enzyme catalyses RX + glutathione = an S-substituted glutathione + a halide anion + H(+). In terms of biological role, conjugation of reduced glutathione to a wide number of exogenous and endogenous hydrophobic electrophiles. The sequence is that of Glutathione S-transferase Mu 6 (Gstm6) from Mus musculus (Mouse).